We begin with the raw amino-acid sequence, 238 residues long: Protein A47 (238 aa).

Belongs to the orthopoxvirus A47 protein family.

The sequence is that of Protein A47 from Vaccinia virus (strain Ankara) (VACV).